The primary structure comprises 193 residues: MVDYILLIISTALINNFVLVKFLGLCPFMGVSKKVETAIGMGMATTFVLTVASLSAYLVETYVLIPLEAQFLRTLVFILVIAVIVQLTEMIVHKTSPTLYRLLGIYLPLITTNCAVLGVALLNVNLSNNLVESVLYGFGAALGFSLVLVLFAALRERLAAADVPRPFQGASIALITAGLMSLAFMGFTGLVKI.

6 helical membrane-spanning segments follow: residues 5 to 25 (ILLI…FLGL), 39 to 59 (IGMG…AYLV), 65 to 85 (IPLE…AVIV), 102 to 122 (LLGI…VALL), 134 to 154 (VLYG…FAAL), and 171 to 191 (SIAL…TGLV).

It belongs to the NqrDE/RnfAE family. The complex is composed of six subunits: RnfA, RnfB, RnfC, RnfD, RnfE and RnfG.

It localises to the cell inner membrane. In terms of biological role, part of a membrane-bound complex that couples electron transfer with translocation of ions across the membrane. The protein is Ion-translocating oxidoreductase complex subunit A of Actinobacillus pleuropneumoniae serotype 5b (strain L20).